The primary structure comprises 334 residues: 6-phosphogluconolactonase (334 aa).

It belongs to the cycloisomerase 2 family.

The catalysed reaction is 6-phospho-D-glucono-1,5-lactone + H2O = 6-phospho-D-gluconate + H(+). Its pathway is carbohydrate degradation; pentose phosphate pathway; D-ribulose 5-phosphate from D-glucose 6-phosphate (oxidative stage): step 2/3. Functionally, catalyzes the hydrolysis of 6-phosphogluconolactone to 6-phosphogluconate. This Buchnera aphidicola subsp. Acyrthosiphon pisum (strain Tuc7) protein is 6-phosphogluconolactonase.